Reading from the N-terminus, the 952-residue chain is Eukaryotic translation initiation factor 3 subunit A (952 aa).

A PCI domain is found at His315–Pro491. A coiled-coil region spans residues Asp522–Thr849. The segment covering Glu757–Arg797 has biased composition (basic and acidic residues). Positions Glu757–Ala952 are disordered. A compositionally biased stretch (low complexity) spans Ala798–Ala809. Residues Glu810–Glu844 show a composition bias toward basic and acidic residues. 2 stretches are compositionally biased toward low complexity: residues Arg856 to Ser878 and Gly893 to Pro918.

It belongs to the eIF-3 subunit A family. In terms of assembly, component of the eukaryotic translation initiation factor 3 (eIF-3) complex.

It is found in the cytoplasm. RNA-binding component of the eukaryotic translation initiation factor 3 (eIF-3) complex, which is involved in protein synthesis of a specialized repertoire of mRNAs and, together with other initiation factors, stimulates binding of mRNA and methionyl-tRNAi to the 40S ribosome. The eIF-3 complex specifically targets and initiates translation of a subset of mRNAs involved in cell proliferation. The chain is Eukaryotic translation initiation factor 3 subunit A from Cryptococcus neoformans var. neoformans serotype D (strain B-3501A) (Filobasidiella neoformans).